A 547-amino-acid chain; its full sequence is MPGKPKHLGVPNGRMVLAVSDGELTSTAGSQAQGEGRGSSLSIHSLPSGPSSPFSTEEQPVASWAQSFERLLQDPRGLAYFTEFLKKEFSAENVTFWKACERFQQIPASDTKQLAQEAHNIYHEFLSSQALSPVNIDRQAWLSEEVLAQPRPDMFRAQQLQIFNLMKFDSYARFVKSPLYQECLLAEAEGRPLREPGSSHLGSPDTARKKPKLKPGKSLPLGVEELGQLPLAEGPCGRPLRKSFRREMTGGAMNSALRRESQGSLNSSASLDLGFLAFVSSKSESHRKSLGSGESESESRPGKYCCVYLPDGTASLALARPGLTIRDMLAGICEKRGLSLPDIKVYLVGNEQKALVLDQDCTVLADQEVRLENRITFQLELVGLERVVRISAKPTKRLQEALQPILAKHGLSLDQVVLHRPGEKQPMDLENPVSSVASQTLVLDTPPDAKMSEARSISPCRSQGCLPRTQTKDSHLPPSSSSLLVEDASSSTGNRQTCDIEGLVELLNRVQSSGAHDQRGLLRKEDLVLPEFLQLPSQRPGSREAPP.

A disordered region spans residues 19 to 59; sequence VSDGELTSTAGSQAQGEGRGSSLSIHSLPSGPSSPFSTEEQ. Phosphoserine occurs at positions 20, 42, 45, 143, 199, 203, and 218. Positions 23 to 58 are enriched in polar residues; it reads ELTSTAGSQAQGEGRGSSLSIHSLPSGPSSPFSTEE. One can recognise an RGS domain in the interval 67–184; that stretch reads SFERLLQDPR…VKSPLYQECL (118 aa). The interval 191-220 is disordered; that stretch reads RPLREPGSSHLGSPDTARKKPKLKPGKSLP. T249 carries the post-translational modification Phosphothreonine. Residue S289 is modified to Phosphoserine. The tract at residues 300–427 is necessary for interaction with RABGEF1; that stretch reads RPGKYCCVYL…LHRPGEKQPM (128 aa). RBD domains are found at residues 303 to 374 and 376 to 446; these read KYCC…LENR and TFQL…LDTP. Residues 447-496 form a disordered region; that stretch reads PDAKMSEARSISPCRSQGCLPRTQTKDSHLPPSSSSLLVEDASSSTGNRQ. The span at 476 to 491 shows a compositional bias: low complexity; sequence LPPSSSSLLVEDASSS. The region spanning 500 to 522 is the GoLoco domain; the sequence is IEGLVELLNRVQSSGAHDQRGLL.

As to quaternary structure, interacts with GNAI1 and GNAI2. Interacts with GNAI3. Interacts with GNAO1. Interacts (via RGS and GoLoco domains) with GNAI1; the interaction occurs in the centrosomes. Interaction with GNAI1 or GNAI3 (via active GTP- or inactive GDP-bound forms) prevents association of RGS14 with centrosomes or nuclear localization. Interacts with RABGEF1; the interactions is GTP-dependent. Interacts with RAP2A; the interactions is GTP-dependent and does not alter its function on G(i) alpha subunits either as GAP or as GDI. Associates with microtubules. Found in a complex with at least BRAF, HRAS, MAP2K1, MAPK3 and RGS14. Interacts with RIC8A (via C-terminus). Interacts (via RBD 1 domain) with HRAS (active GTP-bound form preferentially). Interacts (via RBD domains) with BRAF (via N-terminus); the interaction mediates the formation of a ternary complex with RAF1. Interacts (via RBD domains) with RAF1 (via N-terminus); the interaction mediates the formation of a ternary complex with BRAF. Interacts with KRAS (active GTP-bound form preferentially), MRAS (active GTP-bound form preferentially), NRAS (active GTP-bound form preferentially) and RRAS (active GTP-bound form preferentially). In terms of processing, phosphorylated by PKC. Phosphorylation is increased in presence of forskolin and may enhance the GDI activity on G(i) alpha subunit GNAI1. In terms of tissue distribution, expressed in pyramidal neurons of the CA1, CA2 and fasciola cinerea (FC) subregions of the hippocampus and in the olfactory cortex (at protein level). Expressed in brain, spleen, heart, liver, lung, kidney, skin and thymus (at protein level). Expressed in granular layer of the cerebellum, forbrain, striatum, layer V of the cortex, olfactory cortex, tubercules, subthalamic and hippocampus, particularly in the CA2 region, to a lesser extent in the CA1 region and the external layer of the dentate gyrus. Expressed in neurons.

It is found in the nucleus. The protein resides in the PML body. The protein localises to the cytoplasm. Its subcellular location is the membrane. It localises to the cell membrane. It is found in the cytoskeleton. The protein resides in the spindle. The protein localises to the spindle pole. Its subcellular location is the microtubule organizing center. It localises to the centrosome. It is found in the cell projection. The protein resides in the dendrite. The protein localises to the dendritic spine. Its subcellular location is the postsynaptic density. Its function is as follows. Regulates G protein-coupled receptor signaling cascades. Inhibits signal transduction by increasing the GTPase activity of G protein alpha subunits, thereby driving them into their inactive GDP-bound form. Besides, modulates signal transduction via G protein alpha subunits by functioning as a GDP-dissociation inhibitor (GDI). Has GDI activity on G(i) alpha subunits GNAI1 and GNAI3, but not on GNAI2 and G(o)-alpha subunit GNAO1. Has GAP activity on GNAI0, GNAI2 and GNAI3. May act as a scaffold integrating G protein and Ras/Raf MAPkinase signaling pathways. Inhibits platelet-derived growth factor (PDGF)-stimulated ERK1/ERK2 phosphorylation; a process depending on its interaction with HRAS and that is reversed by G(i) alpha subunit GNAI1. Acts as a positive modulator of microtubule polymerisation and spindle organization through a G(i)-alpha-dependent mechanism. Plays a role in cell division; required for completion of the first mitotic division of the embryo. Involved in visual memory processing capacity; when overexpressed in the V2 secondary visual cortex area. Involved in hippocampal-based learning and memory; acts as a suppressor of synaptic plasticity in CA2 neurons. Required for the nerve growth factor (NGF)-mediated neurite outgrowth. Involved in stress resistance. The protein is Regulator of G-protein signaling 14 (Rgs14) of Mus musculus (Mouse).